Reading from the N-terminus, the 171-residue chain is ATP synthase subunit b (171 aa).

Residues 12–34 traverse the membrane as a helical segment; sequence FGLNLNLFETNVINLAVVIFGLY.

Belongs to the ATPase B chain family. As to quaternary structure, F-type ATPases have 2 components, F(1) - the catalytic core - and F(0) - the membrane proton channel. F(1) has five subunits: alpha(3), beta(3), gamma(1), delta(1), epsilon(1). F(0) has four main subunits: a(1), b(1), b'(1) and c(10-14). The alpha and beta chains form an alternating ring which encloses part of the gamma chain. F(1) is attached to F(0) by a central stalk formed by the gamma and epsilon chains, while a peripheral stalk is formed by the delta, b and b' chains.

It localises to the cellular thylakoid membrane. Its function is as follows. F(1)F(0) ATP synthase produces ATP from ADP in the presence of a proton or sodium gradient. F-type ATPases consist of two structural domains, F(1) containing the extramembraneous catalytic core and F(0) containing the membrane proton channel, linked together by a central stalk and a peripheral stalk. During catalysis, ATP synthesis in the catalytic domain of F(1) is coupled via a rotary mechanism of the central stalk subunits to proton translocation. Component of the F(0) channel, it forms part of the peripheral stalk, linking F(1) to F(0). This is ATP synthase subunit b from Prochlorococcus marinus (strain MIT 9211).